A 448-amino-acid chain; its full sequence is Glucose-6-phosphate isomerase (448 aa).

The Proton donor role is filled by E290. Residues H311 and K425 contribute to the active site.

This sequence belongs to the GPI family.

The protein localises to the cytoplasm. It carries out the reaction alpha-D-glucose 6-phosphate = beta-D-fructose 6-phosphate. The protein operates within carbohydrate biosynthesis; gluconeogenesis. It participates in carbohydrate degradation; glycolysis; D-glyceraldehyde 3-phosphate and glycerone phosphate from D-glucose: step 2/4. In terms of biological role, catalyzes the reversible isomerization of glucose-6-phosphate to fructose-6-phosphate. This is Glucose-6-phosphate isomerase from Lactococcus lactis subsp. lactis (strain IL1403) (Streptococcus lactis).